Consider the following 321-residue polypeptide: Beta-lactamase (321 aa).

A signal peptide spans 1–30 (MEKNRKKQIVVLSIALVCIFILVFSLFHKS). Catalysis depends on Ser83, which acts as the Acyl-ester intermediate. Position 233–235 (233–235 (KTG)) interacts with substrate.

Belongs to the class-A beta-lactamase family.

It carries out the reaction a beta-lactam + H2O = a substituted beta-amino acid. With respect to regulation, inhibited by clavulanic acid. In terms of biological role, can hydrolyze cephalosporins, penicillins and also cefoxitin; but at a slow rate. This Phocaeicola vulgatus (Bacteroides vulgatus) protein is Beta-lactamase (cfxA).